A 337-amino-acid chain; its full sequence is Biotin synthase (337 aa).

The Radical SAM core domain occupies 58 to 283 (PEVEVEGIIS…RTILRFAGGR (226 aa)). [4Fe-4S] cluster contacts are provided by Cys73, Cys77, and Cys80. 4 residues coordinate [2Fe-2S] cluster: Cys116, Cys149, Cys208, and Arg278.

It belongs to the radical SAM superfamily. Biotin synthase family. Homodimer. [4Fe-4S] cluster serves as cofactor. [2Fe-2S] cluster is required as a cofactor.

The catalysed reaction is (4R,5S)-dethiobiotin + (sulfur carrier)-SH + 2 reduced [2Fe-2S]-[ferredoxin] + 2 S-adenosyl-L-methionine = (sulfur carrier)-H + biotin + 2 5'-deoxyadenosine + 2 L-methionine + 2 oxidized [2Fe-2S]-[ferredoxin]. The protein operates within cofactor biosynthesis; biotin biosynthesis; biotin from 7,8-diaminononanoate: step 2/2. Functionally, catalyzes the conversion of dethiobiotin (DTB) to biotin by the insertion of a sulfur atom into dethiobiotin via a radical-based mechanism. The chain is Biotin synthase from Rhodococcus jostii (strain RHA1).